Here is a 524-residue protein sequence, read N- to C-terminus: Chromosomal replication initiator protein DnaA (524 aa).

Residues 1–73 (MELPESAWEQ…DELLSSADHH (73 aa)) form a domain I, interacts with DnaA modulators region. Residues 73 to 187 (HPITSVEISV…DVEGGLQHKS (115 aa)) are domain II. 3 stretches are compositionally biased toward polar residues: residues 86-95 (RSTSFETNQG), 106-126 (APRQ…QPQQ), and 153-165 (NGYN…QPYN). The segment at 86-173 (RSTSFETNQG…YNDNPMGQGK (88 aa)) is disordered. The tract at residues 188 to 404 (NLNPTFIFDN…GALKRVIANA (217 aa)) is domain III, AAA+ region. The ATP site is built by G232, G234, K235, and T236. The segment at 405–524 (HFTGRDISVE…VKNLLRTLTT (120 aa)) is domain IV, binds dsDNA.

Belongs to the DnaA family. As to quaternary structure, oligomerizes as a right-handed, spiral filament on DNA at oriC.

It localises to the cytoplasm. Plays an essential role in the initiation and regulation of chromosomal replication. ATP-DnaA binds to the origin of replication (oriC) to initiate formation of the DNA replication initiation complex once per cell cycle. Binds the DnaA box (a 9 base pair repeat at the origin) and separates the double-stranded (ds)DNA. Forms a right-handed helical filament on oriC DNA; dsDNA binds to the exterior of the filament while single-stranded (ss)DNA is stabiized in the filament's interior. The ATP-DnaA-oriC complex binds and stabilizes one strand of the AT-rich DNA unwinding element (DUE), permitting loading of DNA polymerase. After initiation quickly degrades to an ADP-DnaA complex that is not apt for DNA replication. Binds acidic phospholipids. The sequence is that of Chromosomal replication initiator protein DnaA from Saccharophagus degradans (strain 2-40 / ATCC 43961 / DSM 17024).